A 914-amino-acid chain; its full sequence is Translation initiation factor IF-2 (914 aa).

The disordered stretch occupies residues 58–160 (KTEKKQTAKK…EAEPKIEVMP (103 aa)). The segment covering 70–91 (KKDTVKKDTVKKTAVKKDDSKA) has biased composition (basic and acidic residues). The segment covering 92-103 (AKKTKPIAKKSA) has biased composition (basic residues). Positions 104-160 (PKTEKKVEKKVESKISKPDNEILEAKPEISKPEIKAEPKKEEIEQKQEAEPKIEVMP) are enriched in basic and acidic residues. Residues 413-582 (ERVPVITIMG…LLQADLLELK (170 aa)) form the tr-type G domain. Residues 422-429 (GHVDHGKT) are G1. 422-429 (GHVDHGKT) provides a ligand contact to GTP. Positions 447 to 451 (GITQH) are G2. The tract at residues 468–471 (DTPG) is G3. GTP is bound by residues 468 to 472 (DTPGH) and 522 to 525 (NKMD). The tract at residues 522 to 525 (NKMD) is G4. Residues 558-560 (SAK) form a G5 region.

This sequence belongs to the TRAFAC class translation factor GTPase superfamily. Classic translation factor GTPase family. IF-2 subfamily.

The protein resides in the cytoplasm. Functionally, one of the essential components for the initiation of protein synthesis. Protects formylmethionyl-tRNA from spontaneous hydrolysis and promotes its binding to the 30S ribosomal subunits. Also involved in the hydrolysis of GTP during the formation of the 70S ribosomal complex. The polypeptide is Translation initiation factor IF-2 (Campylobacter hominis (strain ATCC BAA-381 / DSM 21671 / CCUG 45161 / LMG 19568 / NCTC 13146 / CH001A)).